The following is a 242-amino-acid chain: MSPLEQFKVVRLLEIPMPFGMDISFTNCALFMILASLVSAVLLCCALRKRTDGSSSMSHTAVELIYNFVVGAIESNAGVGGLRYIPFVLSIFLFVLACNIIGILPLGFTATSHVSVTLALSVVVCASVTVLGFNHQGLHFLRIFLPEGTPLWLAPMMVFIKLFAYLARPVSLAIRLAANMIAGHTIIAVIAEFVLKMHPVLAPLPFAFIMVLIAFEIFVAILQAYIFTVLTTVYLSDAVAGH.

The next 7 membrane-spanning stretches (helical) occupy residues 23–43 (ISFT…AVLL), 62–82 (VELI…VGGL), 84–104 (YIPF…IGIL), 113–133 (HVSV…VLGF), 143–163 (IFLP…IKLF), 176–196 (LAAN…FVLK), and 201–221 (LAPL…FVAI).

It belongs to the ATPase A chain family. As to quaternary structure, F-type ATPases have 2 components, CF(1) - the catalytic core - and CF(0) - the membrane proton channel. CF(1) has five subunits: alpha(3), beta(3), gamma(1), delta(1), epsilon(1). CF(0) has three main subunits: a(1), b(2) and c(9-12). The alpha and beta chains form an alternating ring which encloses part of the gamma chain. CF(1) is attached to CF(0) by a central stalk formed by the gamma and epsilon chains, while a peripheral stalk is formed by the delta and b chains.

Its subcellular location is the cell inner membrane. Key component of the proton channel; it plays a direct role in the translocation of protons across the membrane. This chain is ATP synthase subunit a, found in Anaplasma phagocytophilum (strain HZ).